The primary structure comprises 80 residues: RNA-binding protein KhpA (80 aa).

The KH domain occupies 33-80; sequence GRTVEVHVHPDDLGKVIGRGGRTATALRKLVAGIGGRGIRVDVVDTDQ.

Belongs to the KhpA RNA-binding protein family.

The protein localises to the cytoplasm. Its function is as follows. A probable RNA-binding protein. The protein is RNA-binding protein KhpA of Mycobacterium leprae (strain TN).